Reading from the N-terminus, the 359-residue chain is Proton-coupled zinc antiporter SLC30A2 (359 aa).

The Cytoplasmic segment spans residues 1 to 56 (MASRSFFGALWKSEASRIPPVNLPSVELAVQSNHYCHAQKDSGSHPNSEKQRARRK). Residues 34 to 37 (HYCH) carry the Mitochondrial localization signal motif. Cys36 contributes to the Zn(2+) binding site. A helical transmembrane segment spans residues 57 to 77 (LYVASAICLVFMIGEIIGGYL). Topologically, residues 78–86 (AQSLAIMTD) are lumenal. A helical transmembrane segment spans residues 87 to 107 (AAHLLTDFASMLISLFSLWVS). The Zn(2+) site is built by His89 and Asp93. Topologically, residues 108 to 123 (SRPATKTMNFGWQRAE) are cytoplasmic. The chain crosses the membrane as a helical span at residues 124 to 144 (ILGALLSVLSIWVVTGVLVYL). Residues 145 to 159 (AVQRLISGDYEIKGD) lie on the Lumenal side of the membrane. Residues 160 to 180 (TMLITSGCAVAVNIIMGLALH) traverse the membrane as a helical segment. Topologically, residues 181–207 (QSGHGHSHGHSHEDSSQQQQNPSVRAA) are cytoplasmic. Residues 208-228 (FIHVVGDLLQSVGVLVAAYII) form a helical membrane-spanning segment. Zn(2+)-binding residues include His210 and Asp214. Residues 229–236 (YFKPEYKY) lie on the Lumenal side of the membrane. Residues 237–257 (VDPICTFLFSILVLGTTLTIL) form a helical membrane-spanning segment. At 258 to 291 (RDVILVLMEGTPKGVDFTTVKNLLLSVDGVEALH) the chain is on the cytoplasmic side. Residues 281-282 (LL) carry the Lysosomal targeting motif motif. Ser283 is subject to Phosphoserine. 3 residues coordinate Zn(2+): His291, His308, and Glu342. A helical membrane pass occupies residues 292-312 (SLHIWALTVAQPVLSVHIAIA). Over 313–359 (QNVDAQAVLKVARDRLQGKFNFHTMTIQIESYSEDMKSCQECQGPSE) the chain is Lumenal.

The protein belongs to the cation diffusion facilitator (CDF) transporter (TC 2.A.4) family. SLC30A subfamily. As to quaternary structure, homodimer. Interacts (via lysosomal targeting motif) with AP3D1; in AP-3-mediated transport to lysosomes. Interacts with TMEM163. Phosphorylated at Ser-283. Phosphorylation at Ser-283 prevents localization to lysosomes. Dephosphorylation of Ser-283 which triggers localization to lysosomes, accumulation of zinc into lysosomes and lysosomal-mediated cell death is induced by TNF-alpha. As to expression, detected in intestine, kidney, seminal vesicles and testis.

It localises to the cytoplasmic vesicle. Its subcellular location is the secretory vesicle membrane. The protein resides in the zymogen granule membrane. It is found in the endosome membrane. The protein localises to the lysosome membrane. It localises to the mitochondrion inner membrane. The enzyme catalyses Zn(2+)(in) + 2 H(+)(out) = Zn(2+)(out) + 2 H(+)(in). Its function is as follows. Electroneutral proton-coupled antiporter concentrating zinc ions into a variety of intracellular organelles including endosomes, zymogen granules and mitochondria. Thereby, plays a crucial role in cellular zinc homeostasis to confer upon cells protection against its potential cytotoxicity. Regulates the zinc concentration of milk, through the transport of zinc ions into secretory vesicles of mammary cells. By concentrating zinc ions into lysosomes participates to lysosomal-mediated cell death during early mammary gland involution. The chain is Proton-coupled zinc antiporter SLC30A2 from Rattus norvegicus (Rat).